The chain runs to 496 residues: Angiopoietin-2 (496 aa).

A signal peptide spans Met1–Ala18. 6 N-linked (GlcNAc...) asparagine glycosylation sites follow: Asn89, Asn119, Asn133, Asn151, Asn240, and Asn304. Residues Ser166 to Gln248 are a coiled coil. Residues Lys275–Asp495 enclose the Fibrinogen C-terminal domain. Cys284 and Cys313 form a disulfide bridge. Ca(2+) is bound by residues Asp429, Asp431, Cys433, and Cys435. 2 disulfide bridges follow: Cys433–Cys435 and Cys437–Cys450.

In terms of assembly, interacts with TEK/TIE2, competing for the same binding site as ANGPT1. Interacts with ITGA5. Interacts with SVEP1/polydom. Interacts with THBD; this interaction significantly inhibits the generation of activated PC and TAFIa/CPB2 by the thrombin/thrombomodulin complex.

The protein resides in the secreted. In terms of biological role, binds to TEK/TIE2, competing for the ANGPT1 binding site, and modulating ANGPT1 signaling. Can induce tyrosine phosphorylation of TEK/TIE2 in the absence of ANGPT1. In the absence of angiogenic inducers, such as VEGF, ANGPT2-mediated loosening of cell-matrix contacts may induce endothelial cell apoptosis with consequent vascular regression. In concert with VEGF, it may facilitate endothelial cell migration and proliferation, thus serving as a permissive angiogenic signal. Involved in the regulation of lymphangiogenesis. The chain is Angiopoietin-2 (ANGPT2) from Homo sapiens (Human).